Reading from the N-terminus, the 430-residue chain is Putative glycylpeptide N-tetradecanoyltransferase 2 (430 aa).

Residues 47–50, 181–183, and 189–193 each bind tetradecanoyl-CoA; these read HKFW, LCV, and SKGLA. The active-site Proton acceptor; via carboxylate is leucine 430.

Belongs to the NMT family.

It catalyses the reaction N-terminal glycyl-[protein] + tetradecanoyl-CoA = N-tetradecanoylglycyl-[protein] + CoA + H(+). May add a myristoyl group to the N-terminal glycine residue of certain cellular proteins. This chain is Putative glycylpeptide N-tetradecanoyltransferase 2 (NMT2), found in Arabidopsis thaliana (Mouse-ear cress).